The sequence spans 568 residues: NADPH oxidase 3 (568 aa).

Residues 1-12 lie on the Cytoplasmic side of the membrane; the sequence is MPTCWILNESVS. The helical transmembrane segment at 13–33 threads the bilayer; that stretch reads FVVALLWLAINIYLFIDTFCW. The Extracellular segment spans residues 34–49; sequence YAEEESFFYTRVILGS. Residues 50–70 traverse the membrane as a helical segment; sequence ALAWARASAVCLNFNCMLILL. The Ferric oxidoreductase domain maps to 55–284; sequence RASAVCLNFN…VVLYACEIII (230 aa). At 71 to 103 the chain is on the cytoplasmic side; the sequence is PVSRNFVSLVRGTSVCCRGPWRRQLDKNLKFHK. The chain crosses the membrane as a helical span at residues 104 to 124; the sequence is LVAYGIAVNSVIHIVAHLFNL. Residues 125–167 lie on the Extracellular side of the membrane; it reads ERYHLGQAKDAEGLLAALSKLGNAPNESYLNPVRTLYTGTTTQ. A helical membrane pass occupies residues 168-188; the sequence is LLMTVSGITGLVISLALILIM. Residues 189 to 201 are Cytoplasmic-facing; it reads TSSTEFIRQSSYE. A helical membrane pass occupies residues 202–222; that stretch reads LFWYTHHIFIFLFISLAIHGG. The Extracellular portion of the chain corresponds to 223 to 395; it reads GRIIRGQTPE…DGPFGGSLAD (173 aa). A glycan (N-linked (GlcNAc...) asparagine) is linked at Asn-238. One can recognise an FAD-binding FR-type domain in the interval 285–395; the sequence is RFWRSHQEVV…DGPFGGSLAD (111 aa). Residues 396–416 form a helical membrane-spanning segment; sequence VFHYPVSVCIATGIGVTPFAS. The Cytoplasmic portion of the chain corresponds to 417–568; sequence LLKSVWYKCC…VHFYYNKENF (152 aa).

In terms of assembly, forms a heterodimer with CYBA/p22phox which is essential for its activity and cell membrane localization. Heme serves as cofactor. N-glycosylated in a CYBA/p22phox-dependent manner. Expressed in the inner ear by the spiral glanglia and the organ of Corti.

It localises to the cell membrane. The catalysed reaction is NADPH + 2 O2 = 2 superoxide + NADP(+) + H(+). Its activity is regulated as follows. Activated by the ototoxic drug cisplatin. Activated by NOXO1. Cooperatively activated by NCF1 and NCF2 or NOXA1 in a phorbol 12-myristate 13-acetate (PMA)-dependent manner. Inhibited by diphenyleneiodonium chloride. In terms of biological role, NADPH oxidase that catalyzes the generation of superoxide from molecular oxygen utilizing NADPH as an electron donor, upon formation of a complex with CYBA/p22phox. Plays a role in the biogenesis of otoconia/otolith, which are crystalline structures of the inner ear involved in the perception of gravity. The sequence is that of NADPH oxidase 3 (Nox3) from Rattus norvegicus (Rat).